A 214-amino-acid polypeptide reads, in one-letter code: Epoxide hydrolase EphH (214 aa).

Serine 28 functions as the Nucleophile in the catalytic mechanism. Catalysis depends on charge relay system residues aspartate 156 and histidine 186.

The protein belongs to the AB hydrolase superfamily.

It catalyses the reaction an epoxide + H2O = an ethanediol. With respect to regulation, inhibited by AUDA, a known epoxide hydrolase inhibitor. Functionally, catalyzes the hydrolysis of epoxide-containing substrates. In vitro, catalyzes the hydrolysis of the synthetic compounds PHOME and styrene oxide. Plays an essential role in subverting phagosomal acidification. Plays a major role in the survival of M.tuberculosis (Mtb) during in vitro acidic stress and protects Mtb in response to phagosomal acidification inside macrophages. Also supports Mtb growth under the nutrient-deprived condition at pH 7.0. The protein is Epoxide hydrolase EphH of Mycobacterium tuberculosis (strain ATCC 25618 / H37Rv).